Reading from the N-terminus, the 366-residue chain is MWPPSHRQLCRAFLLVCVFSVISFFLHIHQDSFPHGLGLSILCPDRRLVTPPVAIFCLPGTAMGPNASSSCPQHPASLSGTWTVYPNGRFGNQMGQYATLLALAQLNGRRAFILPAMHAALAPVFRITLPVLAPEVDSRTPWRELQLHDWMSEEYADLGDPFLKLSGFPCSWTFFHHLREQIRREFTLHDHLREEAQSVLGQLRLGRTGDRPRTFVGVHVRRGDYLQVMPQRWKGVVGDSAYLRQAMDWFRARHEAPVFVVTSNGMEWCKENIDTSQGDVTFAGDGQEATPWKDFALLTQCNHTIMTIGTFGFWAAYLAGGDTVYLANFTLPDSEFLKIFKPEAAFLPEWVGINADLSPLWTLAKP.

Residues Met1–Gln8 are Cytoplasmic-facing. Residues Leu9–Phe25 form a helical; Signal-anchor for type II membrane protein membrane-spanning segment. The Lumenal portion of the chain corresponds to Leu26 to Pro366. N-linked (GlcNAc...) asparagine glycosylation is found at Asn66, Asn302, and Asn328.

Belongs to the glycosyltransferase 11 family.

It localises to the golgi apparatus. The protein resides in the golgi stack membrane. It carries out the reaction a beta-D-galactosyl-(1-&gt;4)-N-acetyl-beta-D-glucosaminyl derivative + GDP-beta-L-fucose = an alpha-L-Fuc-(1-&gt;2)-beta-D-Gal-(1-&gt;4)-beta-D-GlcNAc derivative + GDP + H(+). The enzyme catalyses a ganglioside GA1 + GDP-beta-L-fucose = a ganglioside Fuc-GA1 + GDP + H(+). It catalyses the reaction a beta-D-Gal-(1-&gt;3)-beta-D-GlcNAc-(1-&gt;3)-beta-D-Gal-(1-&gt;4)-beta-D-Glc-(1&lt;-&gt;1')-Cer(d18:1(4E)) + GDP-beta-L-fucose = alpha-L-fucosyl-(1-&gt;2)- beta-D-galactosyl-(1-&gt;3)-N-acetyl-beta-D-glucosaminyl-(1-&gt;3)-beta-D-galactosyl-(1-&gt;4)-beta-D-glucosyl-(1&lt;-&gt;1')-N-acylsphing-4-enine + GDP + H(+). The catalysed reaction is a neolactoside nLc4Cer(d18:1(4E)) + GDP-beta-L-fucose = a neolactoside IV(2)-alpha-Fuc-nLc4Cer(d18:1(4E)) + GDP + H(+). It carries out the reaction a ganglioside GM1 + GDP-beta-L-fucose = a ganglioside Fuc-GM1 + GDP + H(+). The enzyme catalyses beta-D-galactosyl-(1-&gt;3)-N-acetyl-D-galactosamine + GDP-beta-L-fucose = alpha-L-fucosyl-(1-&gt;2)-beta-D-galactosyl-(1-&gt;3)-N-acetyl-D-galactosamine + GDP + H(+). Its pathway is protein modification; protein glycosylation. Functionally, catalyzes the transfer of L-fucose, from a guanosine diphosphate-beta-L-fucose, to the terminal galactose residue of glycoconjugates through an alpha(1,2) linkage leading to H antigen synthesis that is an intermediate substrate in the synthesis of ABO blood group antigens. H antigen is essential for maturation of the glomerular layer of the main olfactory bulb, in cell migration and early cell-cell contacts during tumor associated angiogenesis. Preferentially fucosylates soluble lactose and to a lesser extent fucosylates glycolipids gangliosides GA1 and GM1a. The protein is Galactoside alpha-(1,2)-fucosyltransferase 1 of Gorilla gorilla gorilla (Western lowland gorilla).